The following is a 68-amino-acid chain: MAFEDVWKKISWLYYQYILVTALYMLEPWERAIFNSILISVAGMAVYTGYVFMPQHIMAILQYFEMVQ.

At 1-9 (MAFEDVWKK) the chain is on the cytoplasmic side. A helical transmembrane segment spans residues 10-26 (ISWLYYQYILVTALYML). The Lumenal segment spans residues 27 to 31 (EPWER). A helical membrane pass occupies residues 32–54 (AIFNSILISVAGMAVYTGYVFMP). At 55–68 (QHIMAILQYFEMVQ) the chain is on the cytoplasmic side.

It belongs to the SPTSS family. SPTSSA subfamily. As to quaternary structure, component of the serine palmitoyltransferase (SPT) complex, which is composed of SPTLC1, SPTLC2 or SPTLC3 and SPTSSA or SPTSSB. The heterodimer consisting of SPTLC1 and SPTLC2/SPTLC3 forms the catalytic core of the enzyme, while SPTSSA or SPTSSB subunits determine substrate specificity. SPT also interacts with ORMDL proteins, especially ORMDL3, which negatively regulate SPT activity in the presence of ceramides.

Its subcellular location is the endoplasmic reticulum membrane. It functions in the pathway lipid metabolism; sphingolipid metabolism. In terms of biological role, component of the serine palmitoyltransferase multisubunit enzyme (SPT) that catalyzes the initial and rate-limiting step in sphingolipid biosynthesis by condensing L-serine and activated acyl-CoA (most commonly palmitoyl-CoA) to form long-chain bases. The SPT complex is composed of SPTLC1, SPTLC2 or SPTLC3 and SPTSSA or SPTSSB. Within this complex, the heterodimer consisting of SPTLC1 and SPTLC2/SPTLC3 forms the catalytic core. Within the SPT complex, SPTSSA stimulates the catalytic activity and plays a role in substrate specificity, which depends upon the overall complex composition. The SPTLC1-SPTLC2-SPTSSA complex shows a strong preference for C16-CoA substrate, while the SPTLC1-SPTLC3-SPTSSA isozyme uses both C14-CoA and C16-CoA as substrates, with a slight preference for C14-CoA. Independently of its action as a SPT component, may be involved in MBOAT7 localization to mitochondria-associated membranes, a membrane bridge between the endoplasmic reticulum and mitochondria, may hence affect MBOAT7-catalyzed incorporation of arachidonic acid into phosphatidylinositol. The protein is Serine palmitoyltransferase small subunit A (sptssa) of Salmo salar (Atlantic salmon).